Reading from the N-terminus, the 841-residue chain is SLIT and NTRK-like protein 6 (841 aa).

The N-terminal stretch at methionine 1–serine 26 is a signal peptide. The region spanning serine 27–phenylalanine 67 is the LRRNT 1 domain. Over serine 27–serine 608 the chain is Extracellular. 5 LRR repeats span residues asparagine 89–glycine 110, leucine 113–glycine 134, asparagine 137–lysine 158, arginine 161–phenylalanine 182, and proline 184–glutamate 205. An LRRCT 1 domain is found at asparagine 218 to threonine 269. In terms of domain architecture, LRRNT 2 spans proline 320 to proline 361. LRR repeat units lie at residues asparagine 364–glutamate 385, threonine 388–asparagine 409, arginine 412–glycine 433, asparagine 436–proline 457, lysine 460–glycine 481, and proline 483–aspartate 504. The LRRCT 2 domain occupies asparagine 517–glycine 568. Residues valine 609 to valine 629 form a helical membrane-spanning segment. Residues valine 630–threonine 841 are Cytoplasmic-facing.

This sequence belongs to the SLITRK family. As to expression, in adult brain, highly expressed in putamen with no expression in cerebral cortex. Expressed in adult and fetal lung and fetal liver. Also expressed at high levels in some brain tumors including medulloblastomas and primitive neuroectodermal tumors.

It localises to the cell membrane. Functionally, regulator of neurite outgrowth required for normal hearing and vision. This is SLIT and NTRK-like protein 6 (SLITRK6) from Homo sapiens (Human).